A 90-amino-acid polypeptide reads, in one-letter code: Probable Fe(2+)-trafficking protein (90 aa).

It belongs to the Fe(2+)-trafficking protein family.

Could be a mediator in iron transactions between iron acquisition and iron-requiring processes, such as synthesis and/or repair of Fe-S clusters in biosynthetic enzymes. This chain is Probable Fe(2+)-trafficking protein, found in Pseudoalteromonas atlantica (strain T6c / ATCC BAA-1087).